The primary structure comprises 647 residues: Serine/threonine-protein kinase PLK3 (647 aa).

The tract at residues 1–56 is disordered; it reads MEPAAGFLSPRPFPRAAAPSSPPAGPGPPASASPRSEPGVLAGPQTPDASRLITDP. Positions 20–31 are enriched in pro residues; sequence SSPPAGPGPPAS. Residues 62–314 enclose the Protein kinase domain; that stretch reads YIKGRLLGKG…IEQILRHDFF (253 aa). Residues 68–76 and K91 each bind ATP; that span reads LGKGGFARC. The active-site Proton acceptor is the D185. POLO box domains follow at residues 464–542 and 563–646; these read WVSK…YMEQ and LLLQ…DRSP.

The protein belongs to the protein kinase superfamily. Ser/Thr protein kinase family. CDC5/Polo subfamily. Interacts with GOLGB1. Interacts (via the POLO-box domain) with CIB1; leading to inhibit PLK3 kinase activity. Post-translationally, phosphorylated in an ATM-dependent manner following DNA damage. Phosphorylated as cells enter mitosis and dephosphorylated as cells exit mitosis. Constitutively expressed in post-mitotic neurons.

It localises to the cell projection. The protein localises to the dendrite. Its subcellular location is the cytoplasm. It is found in the nucleus. The protein resides in the nucleolus. It localises to the golgi apparatus. The protein localises to the cytoskeleton. Its subcellular location is the microtubule organizing center. It is found in the centrosome. The catalysed reaction is L-seryl-[protein] + ATP = O-phospho-L-seryl-[protein] + ADP + H(+). It carries out the reaction L-threonyl-[protein] + ATP = O-phospho-L-threonyl-[protein] + ADP + H(+). In terms of biological role, serine/threonine-protein kinase involved in cell cycle regulation, response to stress and Golgi disassembly. Polo-like kinases act by binding and phosphorylating proteins that are already phosphorylated on a specific motif recognized by the POLO box domains. Phosphorylates ATF2, BCL2L1, CDC25A, CDC25C, CHEK2, HIF1A, JUN, p53/TP53, p73/TP73, PTEN, TOP2A and VRK1. Involved in cell cycle regulation: required for entry into S phase and cytokinesis. Phosphorylates BCL2L1, leading to regulate the G2 checkpoint and progression to cytokinesis during mitosis. Plays a key role in response to stress: rapidly activated upon stress stimulation, such as ionizing radiation, reactive oxygen species (ROS), hyperosmotic stress, UV irradiation and hypoxia. Involved in DNA damage response and G1/S transition checkpoint by phosphorylating CDC25A, p53/TP53 and p73/TP73. Phosphorylates p53/TP53 in response to reactive oxygen species (ROS), thereby promoting p53/TP53-mediated apoptosis. Phosphorylates CHEK2 in response to DNA damage, promoting the G2/M transition checkpoint. Phosphorylates the transcription factor p73/TP73 in response to DNA damage, leading to inhibit p73/TP73-mediated transcriptional activation and pro-apoptotic functions. Phosphorylates HIF1A and JUN is response to hypoxia. Phosphorylates ATF2 following hyperosmotic stress in corneal epithelium. Also involved in Golgi disassembly during the cell cycle: part of a MEK1/MAP2K1-dependent pathway that induces Golgi fragmentation during mitosis by mediating phosphorylation of VRK1. May participate in endomitotic cell cycle, a form of mitosis in which both karyokinesis and cytokinesis are interrupted and is a hallmark of megakaryocyte differentiation, via its interaction with CIB1. This chain is Serine/threonine-protein kinase PLK3 (Plk3), found in Rattus norvegicus (Rat).